We begin with the raw amino-acid sequence, 457 residues long: Argininosuccinate lyase (457 aa).

This sequence belongs to the lyase 1 family. Argininosuccinate lyase subfamily.

The protein localises to the cytoplasm. It carries out the reaction 2-(N(omega)-L-arginino)succinate = fumarate + L-arginine. Its pathway is amino-acid biosynthesis; L-arginine biosynthesis; L-arginine from L-ornithine and carbamoyl phosphate: step 3/3. The polypeptide is Argininosuccinate lyase (Bacillus pumilus (strain SAFR-032)).